Reading from the N-terminus, the 500-residue chain is Neuronal pentraxin receptor (500 aa).

Residues 1–2 (MK) lie on the Cytoplasmic side of the membrane. The helical; Signal-anchor for type II membrane protein transmembrane segment at 3-23 (FLAVLLAAGMLAFLGAVICII) threads the bilayer. Over 24-500 (ASVPLAASPA…FDVCKGRAKA (477 aa)) the chain is Extracellular. A glycan (N-linked (GlcNAc...) asparagine) is linked at Asn42. The segment covering 42 to 63 (NASVASGAAASPGPQRSLSALH) has biased composition (low complexity). Disordered regions lie at residues 42–81 (NASV…PAAS) and 162–183 (ESGL…ADGP). Asn216 carries N-linked (GlcNAc...) asparagine glycosylation. One can recognise a Pentraxin (PTX) domain in the interval 292-494 (DAFKISIPIR…GATKAAFDVC (203 aa)). Cys322 and Cys383 form a disulfide bridge. Residues Asn347, Glu425, Gln426, Asp427, and Gln437 each contribute to the Ca(2+) site. The N-linked (GlcNAc...) asparagine glycan is linked to Asn463.

As to quaternary structure, heteropentamer with NPTX1 and/or NPTX2. Also binds taipoxin-associated calcium-binding protein 49 (TCBP49/RCN2). Interacts with KLHL2. It depends on Ca(2+) as a cofactor. In terms of processing, ubiquitinated by a cullin-RING-based BCR (BTB-CUL3-RBX1) E3 ubiquitin-protein ligase complex containing KLHL2.

The protein resides in the membrane. May be involved in mediating uptake of synaptic material during synapse remodeling or in mediating the synaptic clustering of AMPA glutamate receptors at a subset of excitatory synapses. This chain is Neuronal pentraxin receptor (NPTXR), found in Homo sapiens (Human).